A 266-amino-acid polypeptide reads, in one-letter code: MEGANGKQQKHFVLVHGAGHGAWCWYKLKPLLESSGHKVTAIDLVASGINAKRLDEVDTLHEYSLPLLELMAAIPPGEKVILVGHSFGGFSTAIAMEHYPEKISIAVFIASVMPDAVNPPSYFFNLVFEWSPKDEDPLDTKIEEYGSPDQPRTAIRYGPKYLSSKVYQNCTSEEIELANLLLRPISLFAEDLSKAKAFSAEGYGSVKRAYIICNEDKSFPVGFQHWLVENVGVIESKVIKGADHMAMISKPQQLRQCLQEIADKVV.

In terms of domain architecture, AB hydrolase-1 spans 11 to 121; it reads HFVLVHGAGH…VMPDAVNPPS (111 aa). Residues S86, D216, and H244 contribute to the active site.

Belongs to the AB hydrolase superfamily. In terms of assembly, homodimer.

It catalyses the reaction 17-dehydropreakuammicine + H2O = norfluorocurarine + methanol + CO2. The protein operates within alkaloid biosynthesis. Its function is as follows. Hydrolase involved in the biosynthesis of curare monoterpene indole alkaloids (MIAs), natural products such as diaboline, a pharmacologically active compound used to regulate blood pressure. Curare alkaloids act as animal glycine receptor antagonists. Catalyzes the conversion of dehydropreakuammicine to norfluorocurarine. This Strychnos sp protein is Norfluorocurarine synthase 1.